A 529-amino-acid polypeptide reads, in one-letter code: Bifunctional purine biosynthesis protein PurH (529 aa).

The MGS-like domain maps to 1–148 (MQQRRPIRRA…KNHKDVAIVV (148 aa)).

It belongs to the PurH family.

It carries out the reaction (6R)-10-formyltetrahydrofolate + 5-amino-1-(5-phospho-beta-D-ribosyl)imidazole-4-carboxamide = 5-formamido-1-(5-phospho-D-ribosyl)imidazole-4-carboxamide + (6S)-5,6,7,8-tetrahydrofolate. The enzyme catalyses IMP + H2O = 5-formamido-1-(5-phospho-D-ribosyl)imidazole-4-carboxamide. It participates in purine metabolism; IMP biosynthesis via de novo pathway; 5-formamido-1-(5-phospho-D-ribosyl)imidazole-4-carboxamide from 5-amino-1-(5-phospho-D-ribosyl)imidazole-4-carboxamide (10-formyl THF route): step 1/1. It functions in the pathway purine metabolism; IMP biosynthesis via de novo pathway; IMP from 5-formamido-1-(5-phospho-D-ribosyl)imidazole-4-carboxamide: step 1/1. This chain is Bifunctional purine biosynthesis protein PurH, found in Yersinia pseudotuberculosis serotype O:1b (strain IP 31758).